A 201-amino-acid polypeptide reads, in one-letter code: Dephospho-CoA kinase (201 aa).

Residues 4–201 (IIGITGGIAS…LEGGRQDDRD (198 aa)) enclose the DPCK domain. Residue 12-17 (ASGKST) coordinates ATP.

The protein belongs to the CoaE family.

It localises to the cytoplasm. It carries out the reaction 3'-dephospho-CoA + ATP = ADP + CoA + H(+). It participates in cofactor biosynthesis; coenzyme A biosynthesis; CoA from (R)-pantothenate: step 5/5. Catalyzes the phosphorylation of the 3'-hydroxyl group of dephosphocoenzyme A to form coenzyme A. This is Dephospho-CoA kinase from Streptococcus pneumoniae serotype 4 (strain ATCC BAA-334 / TIGR4).